A 556-amino-acid polypeptide reads, in one-letter code: 2-succinyl-5-enolpyruvyl-6-hydroxy-3-cyclohexene-1-carboxylate synthase (556 aa).

It belongs to the TPP enzyme family. MenD subfamily. As to quaternary structure, homodimer. The cofactor is Mg(2+). Mn(2+) serves as cofactor. Thiamine diphosphate is required as a cofactor.

It carries out the reaction isochorismate + 2-oxoglutarate + H(+) = 5-enolpyruvoyl-6-hydroxy-2-succinyl-cyclohex-3-ene-1-carboxylate + CO2. It functions in the pathway quinol/quinone metabolism; 1,4-dihydroxy-2-naphthoate biosynthesis; 1,4-dihydroxy-2-naphthoate from chorismate: step 2/7. It participates in quinol/quinone metabolism; menaquinone biosynthesis. In terms of biological role, catalyzes the thiamine diphosphate-dependent decarboxylation of 2-oxoglutarate and the subsequent addition of the resulting succinic semialdehyde-thiamine pyrophosphate anion to isochorismate to yield 2-succinyl-5-enolpyruvyl-6-hydroxy-3-cyclohexene-1-carboxylate (SEPHCHC). The chain is 2-succinyl-5-enolpyruvyl-6-hydroxy-3-cyclohexene-1-carboxylate synthase from Escherichia coli (strain K12 / MC4100 / BW2952).